The chain runs to 273 residues: Programmed cell death 1 ligand 2 (273 aa).

Positions 1 to 19 are cleaved as a signal peptide; the sequence is MIFLLLMLSLELQLHQIAA. Residues 20-220 lie on the Extracellular side of the membrane; it reads LFTVTVPKEL…SQMEPRTHPT (201 aa). The Ig-like V-type domain maps to 21-118; the sequence is FTVTVPKELY…AWDYKYLTLK (98 aa). N-linked (GlcNAc...) asparagine glycosylation is found at N37, N64, N157, N163, and N189. 2 cysteine pairs are disulfide-bonded: C42–C102 and C143–C192. The 82-residue stretch at 122 to 203 folds into the Ig-like C2-type domain; the sequence is SYRKINTHIL…FWNTHVRELT (82 aa). The helical transmembrane segment at 221-241 threads the bilayer; that stretch reads WLLHIFIPFCIIAFIFIATVI. Topologically, residues 242–273 are cytoplasmic; the sequence is ALRKQLCQKLYSSKDTTKRPVTTTKREVNSAI.

It belongs to the immunoglobulin superfamily. BTN/MOG family. Interacts with PDCD1. Highly expressed in heart, placenta, pancreas, lung and liver and weakly expressed in spleen, lymph nodes and thymus.

It is found in the secreted. Its subcellular location is the endomembrane system. It localises to the cell membrane. Its function is as follows. Involved in the costimulatory signal, essential for T-cell proliferation and IFNG production in a PDCD1-independent manner. Interaction with PDCD1 inhibits T-cell proliferation by blocking cell cycle progression and cytokine production. This chain is Programmed cell death 1 ligand 2 (PDCD1LG2), found in Homo sapiens (Human).